The chain runs to 217 residues: Proteasome subunit beta type-6-A like protein (217 aa).

Residues 1–16 constitute a propeptide, removed in mature form; the sequence is MERHLMDSQIKGVSTG. Catalysis depends on Thr17, which acts as the Nucleophile.

It belongs to the peptidase T1B family. As to quaternary structure, the 26S proteasome consists of a 20S proteasome core and two 19S regulatory subunits. The 20S proteasome core is composed of 28 subunits that are arranged in four stacked rings, resulting in a barrel-shaped structure. The two end rings are each formed by seven alpha subunits, and the two central rings are each formed by seven beta subunits. The catalytic chamber with the active sites is on the inside of the barrel.

It localises to the cytoplasm. It is found in the nucleus. It catalyses the reaction Cleavage of peptide bonds with very broad specificity.. In terms of biological role, the proteasome is a multicatalytic proteinase complex which is characterized by its ability to cleave peptides with Arg, Phe, Tyr, Leu, and Glu adjacent to the leaving group at neutral or slightly basic pH. The proteasome has an ATP-dependent proteolytic activity. This subunit is involved in antigen processing to generate class I binding peptides. The sequence is that of Proteasome subunit beta type-6-A like protein (psmb6l-a) from Salmo salar (Atlantic salmon).